We begin with the raw amino-acid sequence, 160 residues long: Conopressin/conophysin, isoform 2 (160 aa).

A signal peptide spans 1 to 30; it reads MKCSVLQMSRLSWAMCLMLLMLLLLGTAQG. Cys31 and Cys36 form a disulfide bridge. Glycine amide is present on Gly39. Residues 40-47 constitute a propeptide that is removed on maturation; that stretch reads GKRAVDAL. 7 disulfide bridges follow: Cys53/Cys97, Cys56/Cys70, Cys64/Cys87, Cys71/Cys77, Cys104/Cys118, Cys112/Cys130, and Cys119/Cys124.

The protein belongs to the vasopressin/oxytocin family. In terms of tissue distribution, expressed by the venom gland.

The protein resides in the secreted. Targets vasopressin-oxytocin related receptors. The protein is Conopressin/conophysin, isoform 2 of Conus monile (Necklace cone).